The following is a 314-amino-acid chain: Homoserine O-succinyltransferase (314 aa).

Residue cysteine 142 is the Acyl-thioester intermediate of the active site. Lysine 163 and serine 192 together coordinate substrate. Histidine 235 functions as the Proton acceptor in the catalytic mechanism. Residue glutamate 237 is part of the active site. Arginine 249 lines the substrate pocket.

The protein belongs to the MetA family.

The protein resides in the cytoplasm. It carries out the reaction L-homoserine + succinyl-CoA = O-succinyl-L-homoserine + CoA. Its pathway is amino-acid biosynthesis; L-methionine biosynthesis via de novo pathway; O-succinyl-L-homoserine from L-homoserine: step 1/1. Its function is as follows. Transfers a succinyl group from succinyl-CoA to L-homoserine, forming succinyl-L-homoserine. This chain is Homoserine O-succinyltransferase, found in Shewanella frigidimarina (strain NCIMB 400).